The sequence spans 218 residues: MNNRIILFQNFGLKHWIDMFNKMHAFTEVRNINTYDEIWFLEHYPIFTQGLLQKINTITYNNDILHDIPIVSTDRGGQITYHGPGQQILYFLIDLKRRKITIRDLINIMQNLIIETLNYFSIKSHIKKNSPGVYVNNKKISSLGLRVKKGFTLHGLSLNVDMDLTPFNYIYPCGDINIKMTQVKEFNSFLTLNDIRVILIKKLSQLLNVSIIEKFSIK.

Positions isoleucine 32–isoleucine 211 constitute a BPL/LPL catalytic domain. Residues arginine 75 to histidine 82, serine 142 to glycine 144, and glycine 155 to serine 157 each bind substrate. Cysteine 173 serves as the catalytic Acyl-thioester intermediate.

Belongs to the LipB family.

It is found in the cytoplasm. The enzyme catalyses octanoyl-[ACP] + L-lysyl-[protein] = N(6)-octanoyl-L-lysyl-[protein] + holo-[ACP] + H(+). The protein operates within protein modification; protein lipoylation via endogenous pathway; protein N(6)-(lipoyl)lysine from octanoyl-[acyl-carrier-protein]: step 1/2. Catalyzes the transfer of endogenously produced octanoic acid from octanoyl-acyl-carrier-protein onto the lipoyl domains of lipoate-dependent enzymes. Lipoyl-ACP can also act as a substrate although octanoyl-ACP is likely to be the physiological substrate. The protein is Octanoyltransferase of Buchnera aphidicola subsp. Schizaphis graminum (strain Sg).